The sequence spans 187 residues: UPF0200 protein MM_1313 (187 aa).

G9–S16 serves as a coordination point for ATP.

The protein belongs to the UPF0200 family.

The chain is UPF0200 protein MM_1313 from Methanosarcina mazei (strain ATCC BAA-159 / DSM 3647 / Goe1 / Go1 / JCM 11833 / OCM 88) (Methanosarcina frisia).